The chain runs to 66 residues: MLRYSLQARSALRGVRFSSSHSAPKPGSTIPFYINKKPLPTLLYFGTFGVIFSIPFIVVKYHNRNL.

Residues 1 to 17 constitute a mitochondrion transit peptide; sequence MLRYSLQARSALRGVRF. Over 18–38 the chain is Mitochondrial matrix; that stretch reads SSSHSAPKPGSTIPFYINKKP. A helical transmembrane segment spans residues 39–59; the sequence is LPTLLYFGTFGVIFSIPFIVV. The Mitochondrial intermembrane segment spans residues 60-66; sequence KYHNRNL.

The protein belongs to the cytochrome c oxidase VIIc family. As to quaternary structure, component of the cytochrome c oxidase (complex IV, CIV), a multisubunit enzyme composed of a catalytic core of 3 subunits and several supernumerary subunits. The complex exists as a monomer or a dimer and forms supercomplexes (SCs) in the inner mitochondrial membrane with ubiquinol-cytochrome c oxidoreductase (cytochrome b-c1 complex, complex III, CIII).

The protein localises to the mitochondrion inner membrane. Its pathway is energy metabolism; oxidative phosphorylation. In terms of biological role, component of the cytochrome c oxidase, the last enzyme in the mitochondrial electron transport chain which drives oxidative phosphorylation. The respiratory chain contains 3 multisubunit complexes succinate dehydrogenase (complex II, CII), ubiquinol-cytochrome c oxidoreductase (cytochrome b-c1 complex, complex III, CIII) and cytochrome c oxidase (complex IV, CIV), that cooperate to transfer electrons derived from NADH and succinate to molecular oxygen, creating an electrochemical gradient over the inner membrane that drives transmembrane transport and the ATP synthase. Cytochrome c oxidase is the component of the respiratory chain that catalyzes the reduction of oxygen to water. Electrons originating from reduced cytochrome c in the intermembrane space (IMS) are transferred via the dinuclear copper A center (CU(A)) of subunit 2 and heme A of subunit 1 to the active site in subunit 1, a binuclear center (BNC) formed by heme A3 and copper B (CU(B)). The BNC reduces molecular oxygen to 2 water molecules using 4 electrons from cytochrome c in the IMS and 4 protons from the mitochondrial matrix. This is Cytochrome c oxidase polypeptide VIII, mitochondrial (cox8) from Schizosaccharomyces pombe (strain 972 / ATCC 24843) (Fission yeast).